The following is a 567-amino-acid chain: MFLPTTREEMKKLGWRELDVILVTGDAYVDHPSFGVALIGHYLVSHGFKVGIIAQPDWRTEKDITRLGRPRLFFGVTAGNVDSMVANYTASKKKRKTDDYTPGGSGGKRPDRATIVYTNLIKRFFPEVPVVLGGLEASLRRFAHYDWWSEKVRKSILIDSKVDLLVYGMGEKAVLEIAQILSRTGDIEKCKSVRGVVWWSSQKPEGGIELPSYDEISENPEKYAEALKLQTWYTDPYKNILIYQKQDTRYVVQNPPQLPLSQEELDRLYLLPFEREVHPFYAKMGRVKAIETVKFSITAVRGCFGSCSFCALTQHQTTHVSYRSKDSILEEVRILTKKKDFKGTITDVGGPTANLYGSSCSIRETKGQCQKFCLYPSVCKIVRPNHDEFISLLESIRKIPGVRNVFVSSGIRHDFVLAEKDPDVFIRELVKYTPGQLKLAPEHAHPKVLSLMRKPPVELFLEFKRRFETLAKKIGKRKYVIGYFIVGHPGEGWRENNYLRDFILKHLGYFPQQIQIFTPTPGTVSTAMYYSGLDPFTGEKVHVERSLKVRNKMKENVLFKKKGREKR.

Residues 288–560 (KAIETVKFSI…NKMKENVLFK (273 aa)) form the Radical SAM core domain. [4Fe-4S] cluster-binding residues include Cys-303, Cys-307, and Cys-310.

Belongs to the UPF0313 family. [4Fe-4S] cluster is required as a cofactor.

The sequence is that of UPF0313 protein Tpet_0582 from Thermotoga petrophila (strain ATCC BAA-488 / DSM 13995 / JCM 10881 / RKU-1).